The chain runs to 448 residues: Probable rhamnogalacturonase E (448 aa).

Positions 1 to 22 (MTWSTSFLVATSLLSIINSVHA) are cleaved as a signal peptide. Cys-43 and Cys-69 are joined by a disulfide. N-linked (GlcNAc...) asparagine glycans are attached at residues Asn-54, Asn-92, and Asn-131. The active-site Proton donor is Asp-221. Cys-223 and Cys-240 are oxidised to a cystine. Residues Asn-256 and Asn-284 are each glycosylated (N-linked (GlcNAc...) asparagine). Residue His-296 is part of the active site. N-linked (GlcNAc...) asparagine glycosylation is found at Asn-323 and Asn-328. Cystine bridges form between Cys-346–Cys-352 and Cys-374–Cys-382.

This sequence belongs to the glycosyl hydrolase 28 family.

It localises to the secreted. Its function is as follows. Pectinolytic enzymes consist of four classes of enzymes: pectine lyase, polygalacturonase, pectin methylesterase and rhamnogalacturonase. Hydrolyzes alpha-D-galacturonopyranosyl-(1,2)-alpha-L-rhamnopyranosyl linkages in the backbone of the hairy regions of pectins. This is Probable rhamnogalacturonase E (rhgE) from Aspergillus niger (strain ATCC MYA-4892 / CBS 513.88 / FGSC A1513).